The chain runs to 245 residues: Photosystem II protein PSBS2 (245 aa).

Residues Met-1–Tyr-25 constitute a chloroplast transit peptide. A run of 4 helical transmembrane segments spans residues Leu-72–Thr-92, Gly-108–Leu-128, Leu-185–Phe-205, and Glu-217–Gly-237.

This sequence belongs to the ELIP/psbS family.

The protein localises to the plastid. The protein resides in the chloroplast thylakoid membrane. Required for non-photochemical quenching (NPQ), a mechanism that converts and dissipates the harmful excess absorbed light energy into heat and protect the photosynthetic apparatus from photo-oxidative damage. Seems involved in the activation of NPQ, possibly by promoting conformational changes required for activation of LHCSR3-dependent quenching in the antenna of photosystem II (PSII). The sequence is that of Photosystem II protein PSBS2 from Chlamydomonas reinhardtii (Chlamydomonas smithii).